A 427-amino-acid polypeptide reads, in one-letter code: Enolase (427 aa).

A (2R)-2-phosphoglycerate-binding site is contributed by glutamine 163. Glutamate 205 acts as the Proton donor in catalysis. Mg(2+) is bound by residues aspartate 242, glutamate 285, and aspartate 312. (2R)-2-phosphoglycerate is bound by residues lysine 337, arginine 366, serine 367, and lysine 388. The Proton acceptor role is filled by lysine 337.

The protein belongs to the enolase family. Requires Mg(2+) as cofactor.

Its subcellular location is the cytoplasm. The protein localises to the secreted. It localises to the cell surface. The catalysed reaction is (2R)-2-phosphoglycerate = phosphoenolpyruvate + H2O. It functions in the pathway carbohydrate degradation; glycolysis; pyruvate from D-glyceraldehyde 3-phosphate: step 4/5. Functionally, catalyzes the reversible conversion of 2-phosphoglycerate (2-PG) into phosphoenolpyruvate (PEP). It is essential for the degradation of carbohydrates via glycolysis. This Bradyrhizobium diazoefficiens (strain JCM 10833 / BCRC 13528 / IAM 13628 / NBRC 14792 / USDA 110) protein is Enolase.